A 60-amino-acid chain; its full sequence is Single-pass membrane and coiled-coil domain-containing protein 4 homolog (60 aa).

Residues 1–22 are disordered; the sequence is MRKLRGGQTRETRKQKQERREE. Residues 8-22 are compositionally biased toward basic and acidic residues; that stretch reads QTRETRKQKQERREE. A coiled-coil region spans residues 8–34; the sequence is QTRETRKQKQERREENQKIQQQLKTIV. A helical transmembrane segment spans residues 30–50; the sequence is LKTIVLPICGVVFLCIVAYVF.

This sequence belongs to the SMCO4 family.

It is found in the membrane. This is Single-pass membrane and coiled-coil domain-containing protein 4 homolog from Culex quinquefasciatus (Southern house mosquito).